A 454-amino-acid chain; its full sequence is tRNA(Ile)-lysidine synthase (454 aa).

ATP is bound at residue 31–36; the sequence is SGGADS.

Belongs to the tRNA(Ile)-lysidine synthase family.

Its subcellular location is the cytoplasm. It catalyses the reaction cytidine(34) in tRNA(Ile2) + L-lysine + ATP = lysidine(34) in tRNA(Ile2) + AMP + diphosphate + H(+). Functionally, ligates lysine onto the cytidine present at position 34 of the AUA codon-specific tRNA(Ile) that contains the anticodon CAU, in an ATP-dependent manner. Cytidine is converted to lysidine, thus changing the amino acid specificity of the tRNA from methionine to isoleucine. The protein is tRNA(Ile)-lysidine synthase of Porphyromonas gingivalis (strain ATCC 33277 / DSM 20709 / CIP 103683 / JCM 12257 / NCTC 11834 / 2561).